The primary structure comprises 397 residues: Ribosomal RNA large subunit methyltransferase I (397 aa).

The PUA domain maps to 2–78 (TPAIYLVKGR…EQEPIDRDFF (77 aa)).

Belongs to the methyltransferase superfamily. RlmI family.

It is found in the cytoplasm. It catalyses the reaction cytidine(1962) in 23S rRNA + S-adenosyl-L-methionine = 5-methylcytidine(1962) in 23S rRNA + S-adenosyl-L-homocysteine + H(+). Its function is as follows. Specifically methylates the cytosine at position 1962 (m5C1962) of 23S rRNA. The chain is Ribosomal RNA large subunit methyltransferase I from Vibrio cholerae serotype O1 (strain ATCC 39541 / Classical Ogawa 395 / O395).